A 246-amino-acid chain; its full sequence is Azurocidin (246 aa).

Positions 1–19 (MPALRFLALLASLLATSRV) are cleaved as a signal peptide. The propeptide occupies 20 to 26 (GLATLAD). The Peptidase S1 domain occupies 27-242 (IVGGRRAQPQ…FRNWIDSVLN (216 aa)). An intrachain disulfide couples Cys-52 to Cys-68. N-linked (GlcNAc...) asparagine glycans are attached at residues Asn-139 and Asn-170. 2 disulfides stabilise this stretch: Cys-148–Cys-205 and Cys-178–Cys-184. Residues 245–246 (PA) constitute a propeptide that is removed on maturation.

The protein belongs to the peptidase S1 family. Elastase subfamily.

It localises to the cytoplasmic granule membrane. In terms of biological role, this is a neutrophil granule-derived antibacterial and monocyte- and fibroblast-specific chemotactic glycoprotein. Binds heparin. In Sus scrofa (Pig), this protein is Azurocidin.